The chain runs to 310 residues: MKITVIGAGNVGATTAFRIADKKLARELVLLDVVEGIPQGKGLDMYETGPVGLFDTKITGSNDYADTADSDIVIITAGLPRKPGMTREDLLMKNAGIVKEVTDNIMKHSKNPIIIVVSNPLDIMTHVAWVRSGLPKERVIGMAGVLDAARFRSFIAMELGVSMQDINACVLGGHGDAMVPVVKYTTVAGIPISDLLPAETIDKLVERTRNGGAEIVEHLKQGSAFYAPASSVVEMVESIVLDRKRVLPCAVGLEGQYGIDKTFVGVPVKLGRNGVEQIYEINLDQADLDLLQKSAKIVDENCKMLESTIG.

NAD(+)-binding positions include 7–12 (GAGNVG) and D32. The substrate site is built by R81 and R87. NAD(+) contacts are provided by residues N94 and 117 to 119 (VSN). The substrate site is built by N119 and R150. H174 serves as the catalytic Proton acceptor.

The protein belongs to the LDH/MDH superfamily. MDH type 3 family. Homotetramer; arranged as a dimer of dimers.

The enzyme catalyses (S)-malate + NAD(+) = oxaloacetate + NADH + H(+). Catalyzes the reversible oxidation of malate to oxaloacetate. The chain is Malate dehydrogenase from Chlorobaculum parvum (strain DSM 263 / NCIMB 8327) (Chlorobium vibrioforme subsp. thiosulfatophilum).